Here is a 359-residue protein sequence, read N- to C-terminus: MTRLTLALDVMGGDFGPSVTVPAALQALNANSQLTLLLVGNPDIITPLLAKADFEQRSRLQIIPAQSVIASDARPSQAIRASRGTSMRVALELVKEGRAEACVSAGNTGALMGLAKLLLKPLEGIERPALVTVLPHQQKGKTVVLDLGANVDCDSTMLVQFAVMGAVLAEEVVGIKNPRVALLNIGEEETKGLDSIREASLMLKTVPTINYIGYLEANELLTGKTDVLVCDGFTGNVTLKTMEGVVRMFLSLLKSQGEGKKRSWWLLLLKRWLQKSLTRRFSHLNPDQYNGACLLGLRGTVIKSHGAANQRAFAVAIEQAVQAVQRQVPQRIAARLESVYPAGFEPLDDGKGVNLRAHR.

It belongs to the PlsX family. As to quaternary structure, homodimer. Probably interacts with PlsY.

Its subcellular location is the cytoplasm. It carries out the reaction a fatty acyl-[ACP] + phosphate = an acyl phosphate + holo-[ACP]. The protein operates within lipid metabolism; phospholipid metabolism. Catalyzes the reversible formation of acyl-phosphate (acyl-PO(4)) from acyl-[acyl-carrier-protein] (acyl-ACP). This enzyme utilizes acyl-ACP as fatty acyl donor, but not acyl-CoA. The sequence is that of Phosphate acyltransferase from Salmonella agona (strain SL483).